Reading from the N-terminus, the 445-residue chain is Phosphoglucosamine mutase (445 aa).

The active-site Phosphoserine intermediate is the S102. Residues S102, D241, D243, and D245 each coordinate Mg(2+). S102 is subject to Phosphoserine.

Belongs to the phosphohexose mutase family. Requires Mg(2+) as cofactor. Activated by phosphorylation.

It catalyses the reaction alpha-D-glucosamine 1-phosphate = D-glucosamine 6-phosphate. In terms of biological role, catalyzes the conversion of glucosamine-6-phosphate to glucosamine-1-phosphate. This Acinetobacter baumannii (strain SDF) protein is Phosphoglucosamine mutase.